The primary structure comprises 334 residues: Holliday junction branch migration complex subunit RuvB (334 aa).

A large ATPase domain (RuvB-L) region spans residues 1–181; it reads MSEFLTPERT…GIILELDFYT (181 aa). Positions 19 and 20 each coordinate ADP. Glutamate 26, phenylalanine 27, and isoleucine 28 together coordinate ATP. The ADP site is built by phenylalanine 27, isoleucine 28, glycine 61, leucine 62, glycine 63, lysine 64, threonine 65, and threonine 66. ATP is bound by residues leucine 62 and glycine 63. Residues 127–129 and arginine 170 each bind ATP; that span reads EDF. 3 residues coordinate ADP: tyrosine 180, proline 216, and arginine 217. Residues 182-255 are small ATPAse domain (RuvB-S); it reads VKELKEIIKR…TMEVLNIDDE (74 aa). An ATP-binding site is contributed by proline 216. The head domain (RuvB-H) stretch occupies residues 256–334; the sequence is GLDEFDRKIL…KYEVPENRLF (79 aa). The DNA site is built by arginine 309 and arginine 314.

Belongs to the RuvB family. In terms of assembly, homohexamer. Forms an RuvA(8)-RuvB(12)-Holliday junction (HJ) complex. HJ DNA is sandwiched between 2 RuvA tetramers; dsDNA enters through RuvA and exits via RuvB. An RuvB hexamer assembles on each DNA strand where it exits the tetramer. Each RuvB hexamer is contacted by two RuvA subunits (via domain III) on 2 adjacent RuvB subunits; this complex drives branch migration. In the full resolvosome a probable DNA-RuvA(4)-RuvB(12)-RuvC(2) complex forms which resolves the HJ.

The protein resides in the cytoplasm. The enzyme catalyses ATP + H2O = ADP + phosphate + H(+). Functionally, the RuvA-RuvB-RuvC complex processes Holliday junction (HJ) DNA during genetic recombination and DNA repair, while the RuvA-RuvB complex plays an important role in the rescue of blocked DNA replication forks via replication fork reversal (RFR). RuvA specifically binds to HJ cruciform DNA, conferring on it an open structure. The RuvB hexamer acts as an ATP-dependent pump, pulling dsDNA into and through the RuvAB complex. RuvB forms 2 homohexamers on either side of HJ DNA bound by 1 or 2 RuvA tetramers; 4 subunits per hexamer contact DNA at a time. Coordinated motions by a converter formed by DNA-disengaged RuvB subunits stimulates ATP hydrolysis and nucleotide exchange. Immobilization of the converter enables RuvB to convert the ATP-contained energy into a lever motion, pulling 2 nucleotides of DNA out of the RuvA tetramer per ATP hydrolyzed, thus driving DNA branch migration. The RuvB motors rotate together with the DNA substrate, which together with the progressing nucleotide cycle form the mechanistic basis for DNA recombination by continuous HJ branch migration. Branch migration allows RuvC to scan DNA until it finds its consensus sequence, where it cleaves and resolves cruciform DNA. Its function is as follows. Promotes Holliday junction (HJ) branch migration in conjunction with RuvA. Subunits can be free, ADP- or ATP-bound; nucleotide binding changes during the reaction cycle. Has a DNA-dependent ATPase activity; dsDNA and supercoiled DNA but not ssDNA stimulate activity. The polypeptide is Holliday junction branch migration complex subunit RuvB (Thermotoga maritima (strain ATCC 43589 / DSM 3109 / JCM 10099 / NBRC 100826 / MSB8)).